A 290-amino-acid polypeptide reads, in one-letter code: Picrinine-N-methytransferase (290 aa).

An SAM motif I region spans residues 71–80 (MLDVGCGIGG). Residues 133–139 (DGTFDLV) carry the Vacuolar targeting signal motif. The SAM motif II stretch occupies residues 134-142 (GTFDLVFTI). Residues 161–170 (VAAPGAPIVI) are SAM motif III.

Belongs to the class I-like SAM-binding methyltransferase superfamily. gTMT family. In terms of assembly, homodimer. Accumulates in tissues actively synthesizing monoterpenoid indole alkaloids (MIAs) (at protein level). Mainly expressed in young leaves and, to a lower extent, in roots and stems.

It localises to the vacuole membrane. It carries out the reaction picrinine + S-adenosyl-L-methionine = ervincine + S-adenosyl-L-homocysteine + H(+). It functions in the pathway alkaloid biosynthesis; vindoline biosynthesis. Its function is as follows. S-adenosyl-L-methionine-dependent N-methyltransferase involved in the biosynthesis of biologically active monoterpenoid indole alkaloids (MIAs) natural products including vindoline. Catalyzes the conversion of picrinine to N-methylpicrinine (ervincine). Also accepts, with low efficiency, 21-hydroxycyclolochnericine and norajmaline as substrates. In Rauvolfia serpentina (Serpentine wood), this protein is Picrinine-N-methytransferase.